We begin with the raw amino-acid sequence, 299 residues long: Protoheme IX farnesyltransferase 1 (299 aa).

The next 8 membrane-spanning stretches (helical) occupy residues 25-45 (VVVL…RAGV), 47-67 (WTVL…AAAV), 95-115 (TGAL…LLTF), 119-139 (LTAW…TGFL), 147-167 (IVIG…AATG), 173-193 (PLLL…ALAI), 226-246 (ALLA…LYLI), and 279-299 (IWYL…LLNL).

Belongs to the UbiA prenyltransferase family. Protoheme IX farnesyltransferase subfamily.

Its subcellular location is the cell inner membrane. The enzyme catalyses heme b + (2E,6E)-farnesyl diphosphate + H2O = Fe(II)-heme o + diphosphate. The protein operates within porphyrin-containing compound metabolism; heme O biosynthesis; heme O from protoheme: step 1/1. Its function is as follows. Converts heme B (protoheme IX) to heme O by substitution of the vinyl group on carbon 2 of heme B porphyrin ring with a hydroxyethyl farnesyl side group. In Pseudomonas fluorescens (strain Pf0-1), this protein is Protoheme IX farnesyltransferase 1.